We begin with the raw amino-acid sequence, 189 residues long: Apolipoprotein D (189 aa).

A signal peptide spans 1 to 20; the sequence is MVMLLLLLSALAGLFGAAEG. At Gln21 the chain carries Pyrrolidone carboxylic acid. Intrachain disulfides connect Cys28–Cys134 and Cys61–Cys185. Residues Asn65 and Asn98 are each glycosylated (N-linked (GlcNAc...) (complex) asparagine).

Belongs to the calycin superfamily. Lipocalin family. In terms of assembly, homodimer. In plasma, also exists as a disulfide-linked heterodimer with APOA2. Post-translationally, N-glycosylated. N-glycan heterogeneity at Asn-65: Hex5HexNAc4 (major) and Hex6HexNAc5 (minor); at Asn-98: Hex5HexNAc4 (minor), dHex1Hex5HexNAc4 (major), dHex1Hex6HexNAc5 (minor) and dHex1Hex7HexNAc6 (minor). As to expression, expressed in liver, intestine, pancreas, kidney, placenta, adrenal, spleen, fetal brain tissue and tears.

Its subcellular location is the secreted. APOD occurs in the macromolecular complex with lecithin-cholesterol acyltransferase. It is probably involved in the transport and binding of bilin. Appears to be able to transport a variety of ligands in a number of different contexts. The sequence is that of Apolipoprotein D (APOD) from Homo sapiens (Human).